The following is a 62-amino-acid chain: Protein sigN176 (62 aa).

This Dictyostelium discoideum (Social amoeba) protein is Protein sigN176.